Consider the following 361-residue polypeptide: Protein RecA (361 aa).

77–84 contacts ATP; it reads GPESSGKT.

The protein belongs to the RecA family.

It is found in the cytoplasm. Functionally, can catalyze the hydrolysis of ATP in the presence of single-stranded DNA, the ATP-dependent uptake of single-stranded DNA by duplex DNA, and the ATP-dependent hybridization of homologous single-stranded DNAs. It interacts with LexA causing its activation and leading to its autocatalytic cleavage. The protein is Protein RecA of Sinorhizobium medicae (strain WSM419) (Ensifer medicae).